The following is a 469-amino-acid chain: 6-phospho-beta-galactosidase (469 aa).

5 residues coordinate D-galactose 6-phosphate: Gln18, His115, Asn158, Glu159, and Asn296. Residue Glu159 is the Proton donor of the active site. Catalysis depends on Glu374, which acts as the Nucleophile. The D-galactose 6-phosphate site is built by Ser429, Trp430, Lys436, and Tyr438.

The protein belongs to the glycosyl hydrolase 1 family.

The enzyme catalyses a 6-phospho-beta-D-galactoside + H2O = D-galactose 6-phosphate + an alcohol. It participates in carbohydrate metabolism; lactose degradation; D-galactose 6-phosphate and beta-D-glucose from lactose 6-phosphate: step 1/1. The sequence is that of 6-phospho-beta-galactosidase from Staphylococcus haemolyticus (strain JCSC1435).